A 419-amino-acid chain; its full sequence is DNA primase DnaG (419 aa).

Residues 174–260 (DAIIVVEGRS…EVEDLEKDEV (87 aa)) form the Toprim domain. Residues E180, D222, and D224 each contribute to the Mg(2+) site. The tract at residues 277 to 314 (HNILSESDSKNSHKKHNGKHNNKHSNNKHQQHETKVKE) is disordered. The span at 288–305 (SHKKHNGKHNNKHSNNKH) shows a compositional bias: basic residues.

The protein belongs to the archaeal DnaG primase family. In terms of assembly, forms a ternary complex with MCM helicase and DNA. Component of the archaeal exosome complex. It depends on Mg(2+) as a cofactor.

The enzyme catalyses ssDNA + n NTP = ssDNA/pppN(pN)n-1 hybrid + (n-1) diphosphate.. Functionally, RNA polymerase that catalyzes the synthesis of short RNA molecules used as primers for DNA polymerase during DNA replication. Also part of the exosome, which is a complex involved in RNA degradation. Acts as a poly(A)-binding protein that enhances the interaction between heteromeric, adenine-rich transcripts and the exosome. This is DNA primase DnaG from Methanobrevibacter smithii (strain ATCC 35061 / DSM 861 / OCM 144 / PS).